The sequence spans 328 residues: uncharacterized protein (328 aa).

To the C-terminal of para-aminobenzoate synthase component I.

This is an uncharacterized protein from Haemophilus influenzae (strain ATCC 51907 / DSM 11121 / KW20 / Rd).